The chain runs to 363 residues: Type-1 angiotensin II receptor B (363 aa).

The Extracellular segment spans residues 1–27 (MLSNISAGENSEVEKIVVKCSKSGMHN). The N-linked (GlcNAc...) asparagine glycan is linked to asparagine 4. Cystine bridges form between cysteine 20-cysteine 274 and cysteine 103-cysteine 182. Residues 28 to 57 (YIFITIPIIYSTIFVVGVFGNSLVVIVIYS) form a helical membrane-spanning segment. Topologically, residues 58–63 (YMKMKT) are cytoplasmic. A helical transmembrane segment spans residues 64 to 91 (MASVFLMNLALSDLCFVITLPLWAVYTA). The Extracellular segment spans residues 92-100 (MHYHWPFGD). A helical transmembrane segment spans residues 101 to 127 (LLCKIASTAITLNLYTTVFLLTCLSID). Over 128 to 143 (RYSAIVHPMKSRIRRT) the chain is Cytoplasmic. The helical transmembrane segment at 144-167 (VMVARLTCVGIWLVAFLASLPSVI) threads the bilayer. At 168–192 (YRQIFIFPDTNQTVCALVYHSGHIY) the chain is on the extracellular side. Arginine 169 is an angiotensin II binding site. Asparagine 178 carries an N-linked (GlcNAc...) asparagine glycan. Residues tyrosine 186 and lysine 201 each coordinate angiotensin II. A helical transmembrane segment spans residues 193–218 (FMVGMSLVKNIVGFFIPFVIILTSYT). Topologically, residues 219–239 (LIGKTLKEVYRAQRARNDDIF) are cytoplasmic. The helical transmembrane segment at 240 to 268 (KMIVAVVLLFFFCWIPHQVFTFLDVLIQM) threads the bilayer. Topologically, residues 269–278 (DVIQNCKMYD) are extracellular. The chain crosses the membrane as a helical span at residues 279 to 304 (IVDTGMPITICIAYFNSCLNPFLYGF). At 305-363 (FGKKFRKHFLQLIKYIPPKMRTHASVNTKSSTVSQRLSDTKCASNKIALWIFDIEEHCK) the chain is on the cytoplasmic side. Residues cysteine 346 and cysteine 362 are each lipidated (S-palmitoyl cysteine).

It belongs to the G-protein coupled receptor 1 family. C-terminal Ser or Thr residues may be phosphorylated. Heart membranes, follicular oocytes.

It localises to the cell membrane. Receptor for angiotensin II, a vasoconstricting peptide, which acts as a key regulator of blood pressure and sodium retention by the kidney. The activated receptor in turn couples to G-alpha proteins G(q) (GNAQ, GNA11, GNA14 or GNA15) and thus activates phospholipase C and increases the cytosolic Ca(2+) concentrations, which in turn triggers cellular responses such as stimulation of protein kinase C. This Xenopus laevis (African clawed frog) protein is Type-1 angiotensin II receptor B (agtr1-b).